A 355-amino-acid chain; its full sequence is Guanine nucleotide-binding protein G(i) subunit alpha-2 (355 aa).

A lipid anchor (N-myristoyl glycine) is attached at G2. C3 carries S-palmitoyl cysteine lipidation. One can recognise a G-alpha domain in the interval 32-355 (REVKLLLLGA…KNNLKDCGLF (324 aa)). Positions 35 to 48 (KLLLLGAGESGKST) are G1 motif. GTP-binding positions include 40 to 47 (GAGESGKS), 176 to 182 (LRTRVKT), 201 to 205 (DVGGQ), 270 to 273 (NKKD), and A327. Mg(2+)-binding residues include S47 and T182. The tract at residues 174-182 (DVLRTRVKT) is G2 motif. The segment at 197-206 (FKMFDVGGQR) is G3 motif. The G4 motif stretch occupies residues 266–273 (ILFLNKKD). Residues 325-330 (TCATDT) form a G5 motif region.

It belongs to the G-alpha family. G(i/o/t/z) subfamily. As to quaternary structure, g proteins are composed of 3 units; alpha, beta and gamma. The alpha chain contains the guanine nucleotide binding site. In this context, interacts with GNB2. Interacts with UNC5B. Interacts with GPSM1. Interacts with RGS12 and RGS14. Interacts (inactive GDP-bound form) with NUCB1 (via GBA motif); the interaction leads to activation of GNAI3. Interacts (inactive GDP-bound form) with CCDC88C/DAPLE (via GBA motif). Interacts (inactive GDP-bound form) with CCDC8A/GIV (via GBA motif). Ubiquitously expressed. Most abundant in the lung and in the spleen.

Its subcellular location is the cytoplasm. It localises to the cytoskeleton. The protein resides in the microtubule organizing center. It is found in the centrosome. The protein localises to the cell membrane. Its subcellular location is the membrane. In terms of biological role, guanine nucleotide-binding proteins (G proteins) are involved as modulators or transducers in various transmembrane signaling systems. The G(i) proteins are involved in hormonal regulation of adenylate cyclase: they inhibit the cyclase in response to beta-adrenergic stimuli. May play a role in cell division. The polypeptide is Guanine nucleotide-binding protein G(i) subunit alpha-2 (GNAI2) (Cavia porcellus (Guinea pig)).